A 144-amino-acid polypeptide reads, in one-letter code: UPF0306 protein Spro_0510 (144 aa).

Belongs to the UPF0306 family.

The sequence is that of UPF0306 protein Spro_0510 from Serratia proteamaculans (strain 568).